The sequence spans 186 residues: dCTP deaminase (186 aa).

Residue 107–112 (KSTYAR) participates in dCTP binding. Catalysis depends on Glu-133, which acts as the Proton donor/acceptor. DCTP-binding residues include Gln-152, Tyr-166, and Gln-176.

It belongs to the dCTP deaminase family. As to quaternary structure, homotrimer.

The catalysed reaction is dCTP + H2O + H(+) = dUTP + NH4(+). The protein operates within pyrimidine metabolism; dUMP biosynthesis; dUMP from dCTP (dUTP route): step 1/2. Its function is as follows. Catalyzes the deamination of dCTP to dUTP. The chain is dCTP deaminase from Campylobacter lari (strain RM2100 / D67 / ATCC BAA-1060).